Here is a 179-residue protein sequence, read N- to C-terminus: Ribosomal-protein-serine acetyltransferase (179 aa).

Positions 11-172 constitute an N-acetyltransferase domain; it reads LELHAVAENH…NDAYDDVNLY (162 aa).

The protein belongs to the acetyltransferase family. RimL subfamily.

Its subcellular location is the cytoplasm. The catalysed reaction is N-terminal L-seryl-[ribosomal protein bL12] + acetyl-CoA = N-terminal N(alpha)-acetyl-L-seryl-[ribosomal protein bL12] + CoA + H(+). Its function is as follows. This enzyme acetylates the N-terminal serine of ribosomal protein bL12, converting it into the acetylated form of bL12 known as bL7. The protein is Ribosomal-protein-serine acetyltransferase of Escherichia coli (strain K12).